Reading from the N-terminus, the 597-residue chain is Aspartate--tRNA ligase (597 aa).

E180 is a binding site for L-aspartate. The segment at 204-207 (QLFK) is aspartate. R226 contributes to the L-aspartate binding site. ATP is bound by residues 226 to 228 (RDE) and Q235. L-aspartate is bound at residue H454. E488 provides a ligand contact to ATP. Residue R495 coordinates L-aspartate. 540–543 (GLDR) is a binding site for ATP.

The protein belongs to the class-II aminoacyl-tRNA synthetase family. Type 1 subfamily. In terms of assembly, homodimer.

Its subcellular location is the cytoplasm. The enzyme catalyses tRNA(Asp) + L-aspartate + ATP = L-aspartyl-tRNA(Asp) + AMP + diphosphate. Catalyzes the attachment of L-aspartate to tRNA(Asp) in a two-step reaction: L-aspartate is first activated by ATP to form Asp-AMP and then transferred to the acceptor end of tRNA(Asp). The chain is Aspartate--tRNA ligase from Clostridium perfringens (strain ATCC 13124 / DSM 756 / JCM 1290 / NCIMB 6125 / NCTC 8237 / Type A).